The chain runs to 303 residues: Ribosomal protein L11 methyltransferase (303 aa).

Thr-144, Gly-165, Asp-187, and Asn-235 together coordinate S-adenosyl-L-methionine.

Belongs to the methyltransferase superfamily. PrmA family.

It is found in the cytoplasm. It catalyses the reaction L-lysyl-[protein] + 3 S-adenosyl-L-methionine = N(6),N(6),N(6)-trimethyl-L-lysyl-[protein] + 3 S-adenosyl-L-homocysteine + 3 H(+). Its function is as follows. Methylates ribosomal protein L11. The protein is Ribosomal protein L11 methyltransferase of Prochlorococcus marinus (strain AS9601).